Here is a 138-residue protein sequence, read N- to C-terminus: Cysteine desulfuration protein SufE (138 aa).

Residue Cys-51 is the Cysteine persulfide intermediate of the active site.

The protein belongs to the SufE family. In terms of assembly, homodimer. Interacts with SufS.

Its subcellular location is the cytoplasm. It participates in cofactor biosynthesis; iron-sulfur cluster biosynthesis. Functionally, participates in cysteine desulfuration mediated by SufS. Cysteine desulfuration mobilizes sulfur from L-cysteine to yield L-alanine and constitutes an essential step in sulfur metabolism for biosynthesis of a variety of sulfur-containing biomolecules. Functions as a sulfur acceptor for SufS, by mediating the direct transfer of the sulfur atom from the S-sulfanylcysteine of SufS, an intermediate product of cysteine desulfuration process. This chain is Cysteine desulfuration protein SufE, found in Escherichia coli O17:K52:H18 (strain UMN026 / ExPEC).